An 814-amino-acid chain; its full sequence is Kexin (814 aa).

The signal sequence occupies residues 1–19 (MKVRKYITLCFWWAFSTSA). A propeptide spanning residues 20 to 109 (LVSSQQIPLK…LFPRNDLFKR (90 aa)) is cleaved from the precursor. Residue Asn-42 is glycosylated (N-linked (GlcNAc...) asparagine). A propeptide spans 110–113 (LPVP) (removed by dipeptidylpeptidase STE13). Residues 114–678 (APPMDSSLLP…KLSSPRQAMH (565 aa)) are Lumenal-facing. Position 135 (Asp-135) interacts with Ca(2+). A Peptidase S8 domain is found at 141–453 (QWHLVNPSFP…FGKIDAHKLI (313 aa)). Asn-163 is a glycosylation site (N-linked (GlcNAc...) asparagine). Asp-175 (charge relay system) is an active-site residue. Position 184 (Asp-184) interacts with Ca(2+). The active-site Charge relay system is the His-213. Ca(2+)-binding residues include Asn-227, Asp-277, Asp-320, and Glu-350. Intrachain disulfides connect Cys-230–Cys-377 and Cys-322–Cys-352. Ser-385 acts as the Charge relay system in catalysis. Asn-404 and Asn-480 each carry an N-linked (GlcNAc...) asparagine glycan. In terms of domain architecture, P/Homo B spans 462–596 (VNAQTWFYLP…RLKLFGESID (135 aa)). Residues 651 to 671 (PQTTTASTDPDSDPNTPKKLS) are disordered. Over residues 653–667 (TTTASTDPDSDPNTP) the composition is skewed to low complexity. Residues 679 to 699 (YFLTIFLIGATFLVLYFMFFM) traverse the membrane as a helical segment. The Cytoplasmic portion of the chain corresponds to 700 to 814 (KSRRRIRRSR…PDVPPSSGRS (115 aa)). The segment at 756–814 (SLSSSENGDAEHTIDSVLTNENPFSDPIKQKFPNDANAESASNKLQELQPDVPPSSGRS) is disordered. A compositionally biased stretch (polar residues) spans 792 to 801 (NAESASNKLQ).

Belongs to the peptidase S8 family. Furin subfamily. Ca(2+) is required as a cofactor. In terms of processing, O-glycosylated.

It is found in the golgi apparatus. The protein localises to the trans-Golgi network membrane. The catalysed reaction is Cleavage of -Lys-Arg-|-Xaa- and -Arg-Arg-|-Xaa- bonds to process yeast alpha-factor pheromone and killer toxin precursors.. Processing of precursors of alpha-factors and killer toxin. The polypeptide is Kexin (KEX2) (Saccharomyces cerevisiae (strain ATCC 204508 / S288c) (Baker's yeast)).